A 785-amino-acid polypeptide reads, in one-letter code: Mitochondrial intermediate peptidase (785 aa).

The N-terminal 26 residues, 1-26, are a transit peptide targeting the mitochondrion; sequence MLKVTTSRPWVCSRCVRRQVQSRRRL. Residues 26–51 are disordered; the sequence is LATASTQYRESRPVPVDNSAPGAKRD. His-566 is a Zn(2+) binding site. The active site involves Glu-567. Zn(2+) is bound by residues His-570 and His-573.

Belongs to the peptidase M3 family. Zn(2+) is required as a cofactor.

The protein localises to the mitochondrion matrix. The enzyme catalyses Release of an N-terminal octapeptide as second stage of processing of some proteins imported into the mitochondrion.. In terms of biological role, cleaves proteins, imported into the mitochondrion, to their mature size. While most mitochondrial precursor proteins are processed to the mature form in one step by mitochondrial processing peptidase (MPP), the sequential cleavage by MIP of an octapeptide after initial processing by MPP is a required step for a subgroup of nuclear-encoded precursor proteins destined for the matrix or the inner membrane. The chain is Mitochondrial intermediate peptidase (oct1) from Botryotinia fuckeliana (strain B05.10) (Noble rot fungus).